The chain runs to 353 residues: Protein RecA (353 aa).

Position 73 to 80 (73 to 80 (GPESSGKT)) interacts with ATP.

It belongs to the RecA family.

It localises to the cytoplasm. Can catalyze the hydrolysis of ATP in the presence of single-stranded DNA, the ATP-dependent uptake of single-stranded DNA by duplex DNA, and the ATP-dependent hybridization of homologous single-stranded DNAs. It interacts with LexA causing its activation and leading to its autocatalytic cleavage. This chain is Protein RecA, found in Bordetella avium (strain 197N).